The sequence spans 140 residues: Small ribosomal subunit protein uS12 (140 aa).

The residue at position 102 (aspartate 102) is a 3-methylthioaspartic acid.

This sequence belongs to the universal ribosomal protein uS12 family. As to quaternary structure, part of the 30S ribosomal subunit. Contacts proteins S8 and S17. May interact with IF1 in the 30S initiation complex.

In terms of biological role, with S4 and S5 plays an important role in translational accuracy. Interacts with and stabilizes bases of the 16S rRNA that are involved in tRNA selection in the A site and with the mRNA backbone. Located at the interface of the 30S and 50S subunits, it traverses the body of the 30S subunit contacting proteins on the other side and probably holding the rRNA structure together. The combined cluster of proteins S8, S12 and S17 appears to hold together the shoulder and platform of the 30S subunit. This chain is Small ribosomal subunit protein uS12, found in Bacillus cytotoxicus (strain DSM 22905 / CIP 110041 / 391-98 / NVH 391-98).